A 109-amino-acid chain; its full sequence is Aquaporin-2 (109 aa).

The Cytoplasmic segment spans residues 1–6 (SIAFSR). A helical transmembrane segment spans residues 7 to 27 (AVFAEFLATLLFVFFGLGSAL). The Extracellular portion of the chain corresponds to 28 to 35 (NWPSALPS). Residues 36–54 (TLQIAMAFGLGIGTLVQAL) form a helical membrane-spanning segment. Residues 55-59 (GHVSG) lie on the Cytoplasmic side of the membrane. Residues 60 to 69 (AHINPAVTVA) constitute an intramembrane region (discontinuously helical). Positions 63-65 (NPA) match the NPA 1 motif. Residues 70 to 80 (CLVGCHVSFLR) lie on the Cytoplasmic side of the membrane. Residues 81-102 (AAFYVAAQLLGAVAGAALLHEI) form a helical membrane-spanning segment. Residues 103 to 109 (TPAEVRG) lie on the Extracellular side of the membrane.

It belongs to the MIP/aquaporin (TC 1.A.8) family. In terms of assembly, homotetramer. Post-translationally, serine phosphorylation is necessary and sufficient for expression at the apical membrane. Endocytosis is not phosphorylation-dependent. N-glycosylated.

Its subcellular location is the apical cell membrane. It localises to the basolateral cell membrane. The protein localises to the cell membrane. It is found in the cytoplasmic vesicle membrane. The protein resides in the golgi apparatus. Its subcellular location is the trans-Golgi network membrane. The catalysed reaction is H2O(in) = H2O(out). It catalyses the reaction glycerol(in) = glycerol(out). Functionally, forms a water-specific channel that provides the plasma membranes of renal collecting duct with high permeability to water, thereby permitting water to move in the direction of an osmotic gradient. Plays an essential role in renal water homeostasis. Could also be permeable to glycerol. The protein is Aquaporin-2 of Oryctolagus cuniculus (Rabbit).